The chain runs to 426 residues: Glutamyl-tRNA reductase (426 aa).

Residues threonine 51 to arginine 54, serine 110, glutamate 115 to glutamine 117, and glutamine 121 contribute to the substrate site. Catalysis depends on cysteine 52, which acts as the Nucleophile. Position 190-195 (glycine 190–alanine 195) interacts with NADP(+).

The protein belongs to the glutamyl-tRNA reductase family. As to quaternary structure, homodimer.

The catalysed reaction is (S)-4-amino-5-oxopentanoate + tRNA(Glu) + NADP(+) = L-glutamyl-tRNA(Glu) + NADPH + H(+). The protein operates within porphyrin-containing compound metabolism; protoporphyrin-IX biosynthesis; 5-aminolevulinate from L-glutamyl-tRNA(Glu): step 1/2. Functionally, catalyzes the NADPH-dependent reduction of glutamyl-tRNA(Glu) to glutamate 1-semialdehyde (GSA). In Desulfotalea psychrophila (strain LSv54 / DSM 12343), this protein is Glutamyl-tRNA reductase.